We begin with the raw amino-acid sequence, 464 residues long: Siroheme synthase (464 aa).

The precorrin-2 dehydrogenase /sirohydrochlorin ferrochelatase stretch occupies residues 1-203; the sequence is MEFLPLFHNL…GQGAEAERLL (203 aa). Residues 22–23 and 43–44 each bind NAD(+); these read EI and PE. Residue Ser128 is modified to Phosphoserine. The interval 216-464 is uroporphyrinogen-III C-methyltransferase; sequence GEVYLVGAGP…AWFEGAQATV (249 aa). Residue Pro225 participates in S-adenosyl-L-methionine binding. Asp248 serves as the catalytic Proton acceptor. Catalysis depends on Lys270, which acts as the Proton donor. Residues 301–303, Ile306, 331–332, Met383, and Gly412 contribute to the S-adenosyl-L-methionine site; these read GGD and TA.

It in the N-terminal section; belongs to the precorrin-2 dehydrogenase / sirohydrochlorin ferrochelatase family. The protein in the C-terminal section; belongs to the precorrin methyltransferase family.

It catalyses the reaction uroporphyrinogen III + 2 S-adenosyl-L-methionine = precorrin-2 + 2 S-adenosyl-L-homocysteine + H(+). It carries out the reaction precorrin-2 + NAD(+) = sirohydrochlorin + NADH + 2 H(+). The enzyme catalyses siroheme + 2 H(+) = sirohydrochlorin + Fe(2+). It participates in cofactor biosynthesis; adenosylcobalamin biosynthesis; precorrin-2 from uroporphyrinogen III: step 1/1. Its pathway is cofactor biosynthesis; adenosylcobalamin biosynthesis; sirohydrochlorin from precorrin-2: step 1/1. It functions in the pathway porphyrin-containing compound metabolism; siroheme biosynthesis; precorrin-2 from uroporphyrinogen III: step 1/1. The protein operates within porphyrin-containing compound metabolism; siroheme biosynthesis; siroheme from sirohydrochlorin: step 1/1. It participates in porphyrin-containing compound metabolism; siroheme biosynthesis; sirohydrochlorin from precorrin-2: step 1/1. Its function is as follows. Multifunctional enzyme that catalyzes the SAM-dependent methylations of uroporphyrinogen III at position C-2 and C-7 to form precorrin-2 via precorrin-1. Then it catalyzes the NAD-dependent ring dehydrogenation of precorrin-2 to yield sirohydrochlorin. Finally, it catalyzes the ferrochelation of sirohydrochlorin to yield siroheme. In Pseudomonas savastanoi pv. phaseolicola (strain 1448A / Race 6) (Pseudomonas syringae pv. phaseolicola (strain 1448A / Race 6)), this protein is Siroheme synthase.